Reading from the N-terminus, the 451-residue chain is PTS system galactitol-specific EIIC component (451 aa).

The PTS EIIC type-2 domain maps to 6–435 (MRYILDLGPT…IYLTGIFMTW (430 aa)). The next 10 membrane-spanning stretches (helical) occupy residues 9–29 (ILDLGPTVMLPIVIIIFSKIL), 41–61 (LHIGIGFVGIGLVIGLMLDSI), 92–112 (ASQIALVAIPIAILVNVAMLL), 138–158 (LATGSWMIGMAGVVIHAAFVY), 218–238 (FGPFGEPVTVGFVMGLIIGIL), 305–325 (AVVSASLIFIPLTILIAVCVP), 329–349 (VLPFGDLATIGFFVAMAVAVH), 357–377 (LISGVIIMSITLWIATQTIGL), 392–412 (GMVASMDQGGSPITWLLIQVF), and 415–435 (QNIPGFIIIGAIYLTGIFMTW).

In terms of assembly, forms a complex with one each of subunit of GatA, GatB and 2 subunits of GatC.

The protein resides in the cell inner membrane. Functionally, the phosphoenolpyruvate-dependent sugar phosphotransferase system (PTS), a major carbohydrate active transport system, catalyzes the phosphorylation of incoming sugar substrates concomitant with their translocation across the cell membrane. The enzyme II complex composed of GatA, GatB and GatC is involved in galactitol transport. This Escherichia coli O157:H7 protein is PTS system galactitol-specific EIIC component (gatC).